The primary structure comprises 259 residues: Indole-diterpene biosynthesis cluster protein S (259 aa).

5 helical membrane passes run 5 to 25 (EASG…GMVW), 64 to 84 (WFAL…AIIL), 87 to 107 (VYLI…LWVL), 134 to 154 (VLWF…AASF), and 221 to 241 (LGAG…PAAG).

It belongs to the ltmS family.

Its subcellular location is the membrane. Its function is as follows. Part of the gene cluster that mediates the biosynthesis of paspalitrems, indole-diterpene (IDT) mycotoxins that are potent tremorgens in mammals. The geranylgeranyl diphosphate (GGPP) synthase idtG is proposed to catalyze the first step in IDT biosynthesis via catalysis of a series of iterative condensations of isopentenyl diphosphate (IPP) with dimethylallyl diphosphate (DMAPP), geranyl diphosphate (GPP), and farnesyl diphosphate (FPP), to form GGPP. Condensation of indole-3-glycerol phosphate with GGPP by the prenyltransferase idtC then forms 3-geranylgeranylindole (3-GGI). Epoxidation of the two terminal alkenes of the geranylgeranyl moiety by the FAD-dependent monooxygenase idtM, and cyclization by the terpene cyclase idtB then leads to the production of paspaline. The cytochrome P450 monooxygenase idtP then catalyzes oxidative elimination of the pendant methyl group at C-12 of paspaline and generates the C-10 ketone to yield 13-desoxypaxilline. The cytochrome P450 monooxygenase idtQ may catalyze the C-13 oxidation of 13-desoxypaxilline to afford paxilline. Considering that both paspalicine and paxilline were detected in C.paspali, idtQ also catalyzes the formation of paspalinine from 13-desoxypaxilline via paspalicine as an intermediate. Finally, the alpha-prenyltransferase idtF prenylates paspalinine at the C-20 or the C-21 positions to yield paspalitrems A and C, respectively. The hydroxylation of paspalitrem A at C-32 by a still unknown oxidase affords paspalitrem B. The protein is Indole-diterpene biosynthesis cluster protein S of Claviceps paspali (Rye ergot fungus).